A 249-amino-acid chain; its full sequence is DNA repair protein RecO (249 aa).

This sequence belongs to the RecO family.

Functionally, involved in DNA repair and RecF pathway recombination. This is DNA repair protein RecO from Polaromonas naphthalenivorans (strain CJ2).